The primary structure comprises 302 residues: Glycine--tRNA ligase alpha subunit (302 aa).

Belongs to the class-II aminoacyl-tRNA synthetase family. As to quaternary structure, tetramer of two alpha and two beta subunits.

Its subcellular location is the cytoplasm. The catalysed reaction is tRNA(Gly) + glycine + ATP = glycyl-tRNA(Gly) + AMP + diphosphate. The protein is Glycine--tRNA ligase alpha subunit of Enterococcus faecalis (strain ATCC 700802 / V583).